We begin with the raw amino-acid sequence, 649 residues long: Protein WHI4 (649 aa).

Phosphoserine occurs at positions 22 and 206. Disordered stretches follow at residues 196–217 (EHVS…SSAQ) and 228–247 (ISYG…KPRP). The span at 228-238 (ISYGKTSSSPL) shows a compositional bias: polar residues. 2 positions are modified to phosphoserine: Ser258 and Ser283. 2 disordered regions span residues 438 to 461 (LDLN…SIFN) and 604 to 649 (QLPH…YGKS). The 93-residue stretch at 533-625 (NTLYVGNLPP…GGIRLSFSKN (93 aa)) folds into the RRM domain. Polar residues predominate over residues 631–649 (GSNSRSKSGYSFNGSYGKS).

Post-translationally, phosphorylated by PKA in vitro.

The protein resides in the cytoplasm. Functionally, has a partially redundant function to WHI3, a dosage-dependent modulator of cell size. The chain is Protein WHI4 (WHI4) from Saccharomyces cerevisiae (strain ATCC 204508 / S288c) (Baker's yeast).